The chain runs to 130 residues: Small ribosomal subunit protein uS9 (130 aa).

This sequence belongs to the universal ribosomal protein uS9 family.

In Methylococcus capsulatus (strain ATCC 33009 / NCIMB 11132 / Bath), this protein is Small ribosomal subunit protein uS9.